The primary structure comprises 276 residues: Aldo-keto reductase Mjls_1919 (276 aa).

The Proton donor role is filled by Y50. NADPH is bound by residues L190, I228, K230, S231, V232, R236, S239, and N240.

It belongs to the aldo/keto reductase family.

This Mycobacterium sp. (strain JLS) protein is Aldo-keto reductase Mjls_1919.